The chain runs to 482 residues: MVPAGDQAEEAIVADAGKEEAEVRAAMGVEQDGKFSMTSLLWHGGSVWDAWFSCASNQVAQVLLTLPYSFSQLGMLSGLLLQVFYGLMGSWTAYLISVLYVEYRARKEKEGVSFKNHVIQWFEVLDGLLGPYWKAAGLAFNCTFLLFGSVIQLIACASNIYYINDRLDKRTWTYIFGACCSTTVFIPSFHNYRIWSFLGLGMTTYTAWYLAIAAAVHGQVDGVTHSGPSKMVLYFTGATNILYTFGGHAVTVEIMHAMWKPQKFKYIYLVATLYVFTLTLPSASAMYWAFGDALLTHSNAFSLLPRSGWRDAAVILMLIHQFITFGFACTPLYFVWEKAIGMHGTRSVLTRALARLPIVVPIWFLAIIFPFFGPINSAVGALLVSFTVYIIPSLSHILTYRSASARLNAAEKPPPFLPSWSGMFVVNVFVVAWVLVVGFGLGGWASVTNFIKQIDTFGLFAKCYQCPPRAHAGAPLPAPPRH.

The Cytoplasmic segment spans residues 1–58 (MVPAGDQAEEAIVADAGKEEAEVRAAMGVEQDGKFSMTSLLWHGGSVWDAWFSCASNQ). The helical transmembrane segment at 59 to 76 (VAQVLLTLPYSFSQLGML) threads the bilayer. The Extracellular segment spans residues 77-78 (SG). Residues 79–99 (LLLQVFYGLMGSWTAYLISVL) traverse the membrane as a helical segment. Residues 100-134 (YVEYRARKEKEGVSFKNHVIQWFEVLDGLLGPYWK) lie on the Cytoplasmic side of the membrane. The chain crosses the membrane as a helical span at residues 135 to 155 (AAGLAFNCTFLLFGSVIQLIA). Residues 156-171 (CASNIYYINDRLDKRT) lie on the Extracellular side of the membrane. The chain crosses the membrane as a helical span at residues 172 to 192 (WTYIFGACCSTTVFIPSFHNY). Arginine 193 is a topological domain (cytoplasmic). Residues 194 to 214 (IWSFLGLGMTTYTAWYLAIAA) traverse the membrane as a helical segment. Over 215-231 (AVHGQVDGVTHSGPSKM) the chain is Extracellular. Residues 232 to 252 (VLYFTGATNILYTFGGHAVTV) form a helical membrane-spanning segment. Residues 253 to 265 (EIMHAMWKPQKFK) are Cytoplasmic-facing. A helical transmembrane segment spans residues 266–286 (YIYLVATLYVFTLTLPSASAM). The Extracellular portion of the chain corresponds to 287 to 313 (YWAFGDALLTHSNAFSLLPRSGWRDAA). The chain crosses the membrane as a helical span at residues 314-334 (VILMLIHQFITFGFACTPLYF). The Cytoplasmic segment spans residues 335 to 355 (VWEKAIGMHGTRSVLTRALAR). The helical transmembrane segment at 356–376 (LPIVVPIWFLAIIFPFFGPIN) threads the bilayer. Serine 377 is a topological domain (extracellular). Residues 378–398 (AVGALLVSFTVYIIPSLSHIL) traverse the membrane as a helical segment. Residues 399–423 (TYRSASARLNAAEKPPPFLPSWSGM) lie on the Cytoplasmic side of the membrane. A helical membrane pass occupies residues 424–444 (FVVNVFVVAWVLVVGFGLGGW). Residues 445 to 482 (ASVTNFIKQIDTFGLFAKCYQCPPRAHAGAPLPAPPRH) are Extracellular-facing.

The protein belongs to the amino acid/polyamine transporter 2 family. Amino acid/auxin permease (AAAP) (TC 2.A.18.1) subfamily.

The protein localises to the cell membrane. Carrier protein involved in proton-driven auxin influx. May mediate the formation of auxin gradient from developing leaves (site of auxin biosynthesis) to tips. This is Auxin transporter-like protein 2 from Oryza sativa subsp. japonica (Rice).